We begin with the raw amino-acid sequence, 145 residues long: Large ribosomal subunit protein uL15 (145 aa).

The span at 1–18 (MKLHELKYTEGSKKDVTR) shows a compositional bias: basic and acidic residues. Residues 1–51 (MKLHELKYTEGSKKDVTRVGRGMASGKGKTSTRGHKGQNSRSGGGVRVGFE) are disordered. The span at 42–51 (SGGGVRVGFE) shows a compositional bias: gly residues.

It belongs to the universal ribosomal protein uL15 family. In terms of assembly, part of the 50S ribosomal subunit.

In terms of biological role, binds to the 23S rRNA. This is Large ribosomal subunit protein uL15 from Mesoplasma florum (strain ATCC 33453 / NBRC 100688 / NCTC 11704 / L1) (Acholeplasma florum).